Here is a 644-residue protein sequence, read N- to C-terminus: Exoribonuclease 2 (644 aa).

One can recognise an RNB domain in the interval 189 to 516 (REDLTALDFV…NHRLLKAIIK (328 aa)). Residues 561-643 (DSRFAAEIID…ETRSVIARPV (83 aa)) enclose the S1 motif domain.

It belongs to the RNR ribonuclease family. RNase II subfamily.

It is found in the cytoplasm. The catalysed reaction is Exonucleolytic cleavage in the 3'- to 5'-direction to yield nucleoside 5'-phosphates.. Its function is as follows. Involved in mRNA degradation. Hydrolyzes single-stranded polyribonucleotides processively in the 3' to 5' direction. The polypeptide is Exoribonuclease 2 (Cronobacter sakazakii (strain ATCC BAA-894) (Enterobacter sakazakii)).